Consider the following 300-residue polypeptide: Ribosomal protein bS6--L-glutamate ligase (300 aa).

An ATP-grasp domain is found at 104-287 (LQLLARQGID…IAGRMIQWIE (184 aa)). ATP contacts are provided by residues lysine 141, 178–179 (EY), aspartate 187, and 211–213 (RSN). Mg(2+)-binding residues include aspartate 248, glutamate 260, and asparagine 262. Positions 248, 260, and 262 each coordinate Mn(2+).

Belongs to the RimK family. It depends on Mg(2+) as a cofactor. Requires Mn(2+) as cofactor.

Its function is as follows. An L-glutamate ligase that catalyzes the ATP-dependent post-translational addition of glutamate residues to the C-terminus of ribosomal protein bS6 (RpsF). Is also able to catalyze the synthesis of poly-alpha-glutamate in vitro, via ATP hydrolysis from unprotected glutamate as substrate. The number of glutamate residues added to either RpsF or to poly-alpha-glutamate changes with pH. This chain is Ribosomal protein bS6--L-glutamate ligase, found in Salmonella schwarzengrund (strain CVM19633).